The following is a 690-amino-acid chain: UvrABC system protein C (690 aa).

The 80-residue stretch at 15-94 (TDPGVYTFRD…IKRFNPRFNV (80 aa)) folds into the GIY-YIG domain. In terms of domain architecture, UVR spans 207 to 242 (EPVLRRVRKEMEQASENLDFERAASLRDQLQAMQKS).

It belongs to the UvrC family. In terms of assembly, interacts with UvrB in an incision complex.

The protein resides in the cytoplasm. Its function is as follows. The UvrABC repair system catalyzes the recognition and processing of DNA lesions. UvrC both incises the 5' and 3' sides of the lesion. The N-terminal half is responsible for the 3' incision and the C-terminal half is responsible for the 5' incision. In Corynebacterium jeikeium (strain K411), this protein is UvrABC system protein C.